The sequence spans 418 residues: Probable mitochondrial adenine nucleotide transporter BTL2 (418 aa).

Solcar repeat units lie at residues 122 to 205 (MNTR…YRKQ), 215 to 300 (ATNF…LKSS), and 329 to 414 (LGPI…MKIV). 6 helical membrane passes run 127 to 147 (HLWA…PLER), 180 to 200 (GNLL…CAYD), 221 to 241 (FVAG…LDTI), 276 to 296 (LVPS…VYDI), 335 to 355 (LMYG…FEVV), and 383 to 403 (IPAL…SASI).

It belongs to the mitochondrial carrier (TC 2.A.29) family.

It is found in the mitochondrion inner membrane. In terms of biological role, probable mitochondrial adenylate carrier that catalyzes the transport of ATP, ADP and AMP. In Arabidopsis thaliana (Mouse-ear cress), this protein is Probable mitochondrial adenine nucleotide transporter BTL2.